The chain runs to 241 residues: tRNA pseudouridine synthase A (241 aa).

Asp52 acts as the Nucleophile in catalysis. Residue Tyr110 coordinates substrate.

This sequence belongs to the tRNA pseudouridine synthase TruA family. Homodimer.

It carries out the reaction uridine(38/39/40) in tRNA = pseudouridine(38/39/40) in tRNA. Formation of pseudouridine at positions 38, 39 and 40 in the anticodon stem and loop of transfer RNAs. This chain is tRNA pseudouridine synthase A, found in Aquifex aeolicus (strain VF5).